The chain runs to 234 residues: Transcriptional regulatory protein CitB (234 aa).

The region spanning 5 to 121 (TTLIVEDEPM…RLQHTLERFA (117 aa)) is the Response regulatory domain. Residue D56 is modified to 4-aspartylphosphate. The segment at residues 181-200 (ADSLARILGSSKTTARRYLE) is a DNA-binding region (H-T-H motif).

In vitro CitB and the CitA kinase domain form a complex, formation of which is enhanced by ATP. In terms of processing, phosphorylated by CitA.

The protein resides in the cytoplasm. In terms of biological role, member of the two-component regulatory system CitA/CitB essential for expression of citrate-specific fermentation genes. Phosphorylated CitB binds to two sites in the citS-citC intergenic region where it probably activates transcription of both genes. The chain is Transcriptional regulatory protein CitB (citB) from Klebsiella pneumoniae.